Consider the following 120-residue polypeptide: Large ribosomal subunit protein bL19c (120 aa).

Belongs to the bacterial ribosomal protein bL19 family.

The protein resides in the plastid. It is found in the chloroplast. The protein is Large ribosomal subunit protein bL19c of Thalassiosira weissflogii (Marine diatom).